The following is a 992-amino-acid chain: P3N-PIPO polyprotein (992 aa).

A Peptidase S30 domain is found at 168 to 308; it reads TSQCRKPTYV…VENMEDIQHY (141 aa). Residues His-221, Glu-230, and Ser-262 each act as for P1 proteinase activity in the active site. The Involved in interaction with stylet and aphid transmission signature appears at 361 to 364; sequence KLSC. Residues 617 to 619 carry the Involved in virions binding and aphid transmission motif; sequence PTK. The 123-residue stretch at 643 to 765 folds into the Peptidase C6 domain; the sequence is MYIAKEGFCY…QSEMKFYRVG (123 aa). Catalysis depends on for helper component proteinase activity residues Cys-651 and His-724.

It belongs to the potyviridae P3N-PIPO polyprotein family. Interacts (via PIPO domain) with host PCaP1 protein; this interaction may help to anchor the movement complex to the plasma membrane from which the complex could move to the plasmodesmata. Potyviral RNA is expressed as two polyproteins which undergo post-translational proteolytic processing. Genome polyprotein is processed by NIa-pro, P1 and HC-pro proteinases resulting in the production of at least ten individual proteins. P3N-PIPO is cleaved by P1 and HC-pro proteinases resulting in the production of three individual proteins. The P1 proteinase and the HC-pro cleave only their respective C-termini autocatalytically.

The protein localises to the host cell junction. Its subcellular location is the host plasmodesma. It catalyses the reaction Hydrolyzes a Gly-|-Gly bond at its own C-terminus, commonly in the sequence -Tyr-Xaa-Val-Gly-|-Gly, in the processing of the potyviral polyprotein.. Its function is as follows. Required for aphid transmission and also has proteolytic activity. Only cleaves a Gly-Gly dipeptide at its own C-terminus. Interacts with virions and aphid stylets. Acts as a suppressor of RNA-mediated gene silencing, also known as post-transcriptional gene silencing (PTGS), a mechanism of plant viral defense that limits the accumulation of viral RNAs. May have RNA-binding activity. Allows efficient cell to cell propagation, by bypassing the host cell wall barrier. Transports viral genome to neighboring plant cells directly through plasmosdesmata, without any budding. The protein is P3N-PIPO polyprotein of Soybean mosaic virus (strain G2) (SMV).